Reading from the N-terminus, the 53-residue chain is Lantibiotic paenibacillin (53 aa).

A propeptide spanning residues 1–24 (MKVDQMFDLDLRKSYEASELSPQA) is cleaved from the precursor. A24 bears the N-acetylalanine mark. S25 carries the 2,3-didehydroalanine (Ser) modification. 2 positions are modified to 2,3-didehydrobutyrine: T29 and T30. The segment at residues 34-38 (SKAVC) is a cross-link (lanthionine (Ser-Cys)). 3 consecutive cross-links (beta-methyllanthionine (Thr-Cys)) follow at residues 40–43 (TLTC), 42–45 (TCIC), and 46–49 (TGSC). The lanthionine (Ser-Cys) cross-link spans 48 to 52 (SCSNC). A 2,3-didehydroalanine (Ser) modification is found at S50.

In terms of processing, maturation of lantibiotics involves the enzymatic conversion of Thr, and Ser into dehydrated AA and the formation of thioether bonds with cysteine. This is followed by membrane translocation and cleavage of the modified precursor. The structure of the 2,3-didehydrobutyrines is not discussed in PubMed:17071789.

Its subcellular location is the secreted. In terms of biological role, lanthionine-containing peptide antibiotic (lantibiotic) active on Gram-positive bacteria. The bactericidal activity of lantibiotics is based on depolarization of energized bacterial cytoplasmic membranes, initiated by the formation of aqueous transmembrane pores. Lacks antibacterial activity against Gram-negative bacteria. The chain is Lantibiotic paenibacillin from Paenibacillus polymyxa (Bacillus polymyxa).